The following is a 130-amino-acid chain: Small ribosomal subunit protein uS8 (130 aa).

This sequence belongs to the universal ribosomal protein uS8 family. Part of the 30S ribosomal subunit.

One of the primary rRNA binding proteins, it binds directly to 16S rRNA central domain where it helps coordinate assembly of the platform of the 30S subunit. The sequence is that of Small ribosomal subunit protein uS8 (rps8) from Methanocaldococcus jannaschii (strain ATCC 43067 / DSM 2661 / JAL-1 / JCM 10045 / NBRC 100440) (Methanococcus jannaschii).